The chain runs to 416 residues: Squalene synthase (416 aa).

NADP(+) is bound by residues R52 and R77. Positions 80, 83, and 84 each coordinate Mg(2+). R218 is an NADP(+) binding site. Residues 284–304 (SVFNFCAIPQVMAIATLAACY) traverse the membrane as a helical segment. NADP(+) is bound by residues K315 and R317. The chain crosses the membrane as a helical span at residues 384–404 (PIYLSFIMLLAALSWQYLSTL).

Belongs to the phytoene/squalene synthase family. Mg(2+) serves as cofactor.

It localises to the endoplasmic reticulum membrane. It carries out the reaction 2 (2E,6E)-farnesyl diphosphate + NADPH + H(+) = squalene + 2 diphosphate + NADP(+). The enzyme catalyses 2 (2E,6E)-farnesyl diphosphate + NADH + H(+) = squalene + 2 diphosphate + NAD(+). It catalyses the reaction presqualene diphosphate + NADH + H(+) = squalene + diphosphate + NAD(+). The catalysed reaction is presqualene diphosphate + NADPH + H(+) = squalene + diphosphate + NADP(+). It carries out the reaction 2 (2E,6E)-farnesyl diphosphate = presqualene diphosphate + diphosphate. It functions in the pathway terpene metabolism; lanosterol biosynthesis; lanosterol from farnesyl diphosphate: step 1/3. In terms of biological role, catalyzes the condensation of 2 farnesyl pyrophosphate (FPP) moieties to form squalene. Proceeds in two distinct steps. In the first half-reaction, two molecules of FPP react to form the stable presqualene diphosphate intermediate (PSQPP), with concomitant release of a proton and a molecule of inorganic diphosphate. In the second half-reaction, PSQPP undergoes heterolysis, isomerization, and reduction with NADPH or NADH to form squalene. It is the first committed enzyme of the sterol biosynthesis pathway. In Rattus norvegicus (Rat), this protein is Squalene synthase (Fdft1).